Reading from the N-terminus, the 116-residue chain is Large ribosomal subunit protein bL19 (116 aa).

This sequence belongs to the bacterial ribosomal protein bL19 family.

Functionally, this protein is located at the 30S-50S ribosomal subunit interface and may play a role in the structure and function of the aminoacyl-tRNA binding site. The sequence is that of Large ribosomal subunit protein bL19 from Actinobacillus pleuropneumoniae serotype 5b (strain L20).